A 217-amino-acid polypeptide reads, in one-letter code: Small ribosomal subunit protein uS3 (217 aa).

Residues 40-110 (IRDLINNSFN…EVYINIHEVR (71 aa)) form the KH type-2 domain.

The protein belongs to the universal ribosomal protein uS3 family. As to quaternary structure, part of the 30S ribosomal subunit. Forms a tight complex with proteins S10 and S14.

Its function is as follows. Binds the lower part of the 30S subunit head. Binds mRNA in the 70S ribosome, positioning it for translation. This chain is Small ribosomal subunit protein uS3, found in Rickettsia canadensis (strain McKiel).